The following is a 215-amino-acid chain: N-(5'-phosphoribosyl)anthranilate isomerase (215 aa).

This sequence belongs to the TrpF family.

The enzyme catalyses N-(5-phospho-beta-D-ribosyl)anthranilate = 1-(2-carboxyphenylamino)-1-deoxy-D-ribulose 5-phosphate. Its pathway is amino-acid biosynthesis; L-tryptophan biosynthesis; L-tryptophan from chorismate: step 3/5. This Paracoccus denitrificans (strain Pd 1222) protein is N-(5'-phosphoribosyl)anthranilate isomerase.